A 396-amino-acid chain; its full sequence is Aspartate aminotransferase (396 aa).

The L-aspartate site is built by G34, W130, and N183. Position 246 is an N6-(pyridoxal phosphate)lysine (K246). R374 contacts L-aspartate.

Belongs to the class-I pyridoxal-phosphate-dependent aminotransferase family. In terms of assembly, homodimer. Pyridoxal 5'-phosphate serves as cofactor.

The protein resides in the cytoplasm. It carries out the reaction L-aspartate + 2-oxoglutarate = oxaloacetate + L-glutamate. The sequence is that of Aspartate aminotransferase (aspC) from Salmonella typhi.